The sequence spans 308 residues: Hydroxyacylglutathione hydrolase, mitochondrial (308 aa).

The transit peptide at 1–13 (MVVGRGLLGRRSL) directs the protein to the mitochondrion. Residues His102, His104, Asp106, and His107 each coordinate Zn(2+). Residue Lys116 is modified to N6-acetyllysine. Zn(2+) is bound by residues His158 and Asp182. Substrate-binding positions include 191–193 (KFY) and 221–223 (HEY). Zn(2+) is bound at residue His221. The residue at position 229 (Lys229) is an N6-acetyllysine; alternate. The residue at position 229 (Lys229) is an N6-succinyllysine; alternate. Substrate is bound at residue 297 to 300 (RREK).

This sequence belongs to the metallo-beta-lactamase superfamily. Glyoxalase II family. As to quaternary structure, monomer. It depends on Zn(2+) as a cofactor. In terms of tissue distribution, expressed in liver and kidney.

It localises to the mitochondrion matrix. It is found in the cytoplasm. The catalysed reaction is an S-(2-hydroxyacyl)glutathione + H2O = a 2-hydroxy carboxylate + glutathione + H(+). It carries out the reaction (R)-S-lactoylglutathione + H2O = (R)-lactate + glutathione + H(+). The protein operates within secondary metabolite metabolism; methylglyoxal degradation; (R)-lactate from methylglyoxal: step 2/2. Functionally, thiolesterase that catalyzes the hydrolysis of S-D-lactoyl-glutathione to form glutathione and D-lactic acid. The sequence is that of Hydroxyacylglutathione hydrolase, mitochondrial (HAGH) from Homo sapiens (Human).